The primary structure comprises 478 residues: Protein adenylyltransferase VbhT (478 aa).

In terms of domain architecture, Fido spans 55 to 200 (FDLDHMKKIH…RRNLTEFTVN (146 aa)). Residues 85-88 (KDNS), 133-136 (NALH), 140-147 (EGNGRTLR), and S175 contribute to the ATP site.

Homodimer. Interacts with VbhA.

It catalyses the reaction L-tyrosyl-[protein] + ATP = O-(5'-adenylyl)-L-tyrosyl-[protein] + diphosphate. The catalysed reaction is L-threonyl-[protein] + ATP = 3-O-(5'-adenylyl)-L-threonyl-[protein] + diphosphate. Its activity is regulated as follows. Adenylyltransferase activity is inhibited by antitoxin VbhA; which acts by competing with ATP-binding at Arg-147 and prevents productive ATP-binding. In terms of biological role, toxic component of type II toxin-antitoxin (TA) system VbhT-VbhA. Adenylyltransferase involved in virulence by mediating the addition of adenosine 5'-monophosphate (AMP) to specific residue of host GTPases. The resulting AMPylation affects GTPases, impairing actin assembly in infected cells. This Bartonella schoenbuchensis (strain DSM 13525 / NCTC 13165 / R1) protein is Protein adenylyltransferase VbhT (vbhT).